The chain runs to 445 residues: Exodeoxyribonuclease 7 large subunit (445 aa).

The protein belongs to the XseA family. As to quaternary structure, heterooligomer composed of large and small subunits.

Its subcellular location is the cytoplasm. The enzyme catalyses Exonucleolytic cleavage in either 5'- to 3'- or 3'- to 5'-direction to yield nucleoside 5'-phosphates.. Bidirectionally degrades single-stranded DNA into large acid-insoluble oligonucleotides, which are then degraded further into small acid-soluble oligonucleotides. The chain is Exodeoxyribonuclease 7 large subunit from Xanthomonas axonopodis pv. citri (strain 306).